A 1380-amino-acid chain; its full sequence is DNA-directed RNA polymerase subunit beta (1380 aa).

It belongs to the RNA polymerase beta chain family. In terms of assembly, the RNAP catalytic core consists of 2 alpha, 1 beta, 1 beta' and 1 omega subunit. When a sigma factor is associated with the core the holoenzyme is formed, which can initiate transcription.

The catalysed reaction is RNA(n) + a ribonucleoside 5'-triphosphate = RNA(n+1) + diphosphate. DNA-dependent RNA polymerase catalyzes the transcription of DNA into RNA using the four ribonucleoside triphosphates as substrates. The chain is DNA-directed RNA polymerase subunit beta from Rhizobium rhizogenes (strain K84 / ATCC BAA-868) (Agrobacterium radiobacter).